We begin with the raw amino-acid sequence, 159 residues long: Globin CTT-W (159 aa).

The N-terminal stretch at 1–16 (MKFLVILTLCIAGAIA) is a signal peptide. The Globin domain maps to 17–159 (HCDKAPFIKA…HHAIVYSILE (143 aa)). 2 residues coordinate heme b: histidine 73 and histidine 108.

The protein belongs to the globin family.

The polypeptide is Globin CTT-W (CTT-W) (Chironomus thummi thummi (Midge)).